A 253-amino-acid chain; its full sequence is Large ribosomal subunit protein uL4 (253 aa).

Belongs to the universal ribosomal protein uL4 family. Part of the 50S ribosomal subunit.

Functionally, one of the primary rRNA binding proteins, this protein initially binds near the 5'-end of the 23S rRNA. It is important during the early stages of 50S assembly. It makes multiple contacts with different domains of the 23S rRNA in the assembled 50S subunit and ribosome. Forms part of the polypeptide exit tunnel. The protein is Large ribosomal subunit protein uL4 of Methanococcoides burtonii (strain DSM 6242 / NBRC 107633 / OCM 468 / ACE-M).